Consider the following 194-residue polypeptide: FMN-dependent NADH:quinone oxidoreductase (194 aa).

FMN is bound by residues Ser-9, 15 to 17 (SIS), and 85 to 88 (MYNF).

Belongs to the azoreductase type 1 family. As to quaternary structure, homodimer. FMN serves as cofactor.

It carries out the reaction 2 a quinone + NADH + H(+) = 2 a 1,4-benzosemiquinone + NAD(+). The catalysed reaction is N,N-dimethyl-1,4-phenylenediamine + anthranilate + 2 NAD(+) = 2-(4-dimethylaminophenyl)diazenylbenzoate + 2 NADH + 2 H(+). Functionally, quinone reductase that provides resistance to thiol-specific stress caused by electrophilic quinones. Also exhibits azoreductase activity. Catalyzes the reductive cleavage of the azo bond in aromatic azo compounds to the corresponding amines. The protein is FMN-dependent NADH:quinone oxidoreductase of Xanthomonas oryzae pv. oryzae (strain MAFF 311018).